A 188-amino-acid chain; its full sequence is uncharacterized protein (188 aa).

The protein belongs to the isochorismatase family.

This is an uncharacterized protein from Escherichia coli O157:H7.